The following is a 431-amino-acid chain: Glucose-1-phosphate adenylyltransferase (431 aa).

K39 lines the beta-D-fructose 1,6-bisphosphate pocket. AMP is bound by residues R40, H46, and R52. Y114 is a binding site for alpha-D-glucose 1-phosphate. R130 contributes to the AMP binding site. Residues G179, 194–195, and S212 each bind alpha-D-glucose 1-phosphate; that span reads EK. E370 and R386 together coordinate AMP. Beta-D-fructose 1,6-bisphosphate-binding positions include 419-423 and 429-431; these read REMLR and QER.

The protein belongs to the bacterial/plant glucose-1-phosphate adenylyltransferase family. As to quaternary structure, homotetramer.

It catalyses the reaction alpha-D-glucose 1-phosphate + ATP + H(+) = ADP-alpha-D-glucose + diphosphate. It participates in glycan biosynthesis; glycogen biosynthesis. With respect to regulation, allosterically activated by fructose-1,6-bisphosphate (F16BP) and inhibited by AMP. Its function is as follows. Involved in the biosynthesis of ADP-glucose, a building block required for the elongation reactions to produce glycogen. Catalyzes the reaction between ATP and alpha-D-glucose 1-phosphate (G1P) to produce pyrophosphate and ADP-Glc. In Escherichia coli O45:K1 (strain S88 / ExPEC), this protein is Glucose-1-phosphate adenylyltransferase.